Here is a 208-residue protein sequence, read N- to C-terminus: Small ribosomal subunit protein eS8 (208 aa).

The segment at 1–33 (MGISRDHWHKRRATGGKRKPIRKKRKFELGRPA) is disordered. Positions 7-26 (HWHKRRATGGKRKPIRKKRK) are enriched in basic residues.

Belongs to the eukaryotic ribosomal protein eS8 family.

The protein is Small ribosomal subunit protein eS8 (RpS8) of Apis mellifera (Honeybee).